Here is a 484-residue protein sequence, read N- to C-terminus: Tyramine receptor 1 (484 aa).

Residues 1–54 lie on the Extracellular side of the membrane; that stretch reads MVRVELQAASLMNGSSAAEEPQDALVGGDACGGRRPPSVLGVRLAVPEWEVAVT. Residue Asn13 is glycosylated (N-linked (GlcNAc...) asparagine). The helical transmembrane segment at 55–77 threads the bilayer; sequence AVSLSLIILITIVGNVLVVLSVF. Residues 78-87 lie on the Cytoplasmic side of the membrane; sequence TYKPLRIVQN. The chain crosses the membrane as a helical span at residues 88-109; sequence FFIVSLAVADLTVAVLVMPFNV. Over 110–126 the chain is Extracellular; that stretch reads AYSLIQRWVFGIVVCKM. Cys124 and Cys203 are oxidised to a cystine. A helical transmembrane segment spans residues 127–147; that stretch reads WLTCDVLCCTASILNLCAIAL. Residues 148–167 are Cytoplasmic-facing; sequence DRYWAITDPINYAQKRTLRR. The helical transmembrane segment at 168–190 threads the bilayer; the sequence is VLAMIAGVWLLSGVISSPPLIGW. Over 191-215 the chain is Extracellular; sequence NDWPMEFNDTTPCQLTEEQGYVIYS. Asn198 carries N-linked (GlcNAc...) asparagine glycosylation. The helical transmembrane segment at 216–237 threads the bilayer; the sequence is SLGSFFIPLFIMTIVYVEIFIA. Topologically, residues 238-411 are cytoplasmic; the sequence is TKRRLRERAK…LSKERRAART (174 aa). A compositionally biased stretch (polar residues) spans 253–280; that stretch reads SAMKQQMAAQAVPSSVPSHDQESVSSET. Disordered regions lie at residues 253–322 and 358–383; these read SAMK…PAMV and TTTA…PTPV. The span at 295 to 306 shows a compositional bias: basic residues; the sequence is EKRRKTKKKSKK. The segment covering 361 to 378 has biased composition (polar residues); it reads AVTDSPRSRTASQKGSTA. Residues 412 to 433 form a helical membrane-spanning segment; it reads LGIIMGVFVVCWLPFFLMYVIV. The Extracellular portion of the chain corresponds to 434–448; it reads PFCNPSCKPSPKLVN. The helical transmembrane segment at 449 to 470 threads the bilayer; that stretch reads FITWLGYINSALNPIIYTIFNL. Over 471-484 the chain is Cytoplasmic; sequence DFRRAFKKLLHFKT.

The protein belongs to the G-protein coupled receptor 1 family. In terms of tissue distribution, present mainly in the central nervous system, especially in the supra- and subesophageal, thoracic and abdominal ganglia. Not found in the distal part of optic lobes.

It is found in the cell membrane. G-protein coupled receptor for tyramine, a known neurotransmitter and neuromodulator and direct precursor of octopamine. The rank order of potency for agonists of this receptor is tyramine &gt; naphazoline &gt; tolazoline &gt; DL-octopamine &gt; dopamine &gt; epinephrine &gt; 5-hydroxytryptamine. For antagonists, the rank order is yohimbine &gt; chlorpromazine &gt; mianserin &gt; phentolamine &gt; metoclopramide. The protein is Tyramine receptor 1 (GCR1) of Locusta migratoria (Migratory locust).